Here is a 207-residue protein sequence, read N- to C-terminus: Sodium/potassium-transporting ATPase subunit beta-1-interacting protein 1 (207 aa).

Positions 1 to 21 (MGKCSGRCTLVAFCCLQLVAA) are cleaved as a signal peptide. Topologically, residues 22–34 (LERQIFDFLGYQW) are extracellular. A helical membrane pass occupies residues 35 to 55 (APILANFLHIMAVILGIFGTV). Residues 56–61 (QYRSRY) lie on the Cytoplasmic side of the membrane. A helical transmembrane segment spans residues 62-82 (LILYAAWLVLWVGWNAFIICF). Residues 83 to 146 (YLEVGQLSQD…GCLLDYPYIE (64 aa)) are Extracellular-facing. The N-linked (GlcNAc...) asparagine glycan is linked to N100. The chain crosses the membrane as a helical span at residues 147-167 (ALSSALQIFLALFGFVFACYV). Over 168–207 (SKVFLEEEDSFDFIGGFDSYGYQAPQKTSHLQLQPLYTSG) the chain is Cytoplasmic.

The protein belongs to the NKAIN family. Interacts with ATP1B1 C-terminus.

The protein localises to the cell membrane. The protein is Sodium/potassium-transporting ATPase subunit beta-1-interacting protein 1 (NKAIN1) of Homo sapiens (Human).